We begin with the raw amino-acid sequence, 94 residues long: Protein translocase subunit SecE (94 aa).

A disordered region spans residues Met-1 to Lys-32. The segment covering Lys-22–Lys-32 has biased composition (basic residues). A helical transmembrane segment spans residues Thr-65–Phe-85.

It belongs to the SecE/SEC61-gamma family. As to quaternary structure, component of the Sec protein translocase complex. Heterotrimer consisting of SecY, SecE and SecG subunits. The heterotrimers can form oligomers, although 1 heterotrimer is thought to be able to translocate proteins. Interacts with the ribosome. Interacts with SecDF, and other proteins may be involved. Interacts with SecA.

The protein resides in the cell membrane. In terms of biological role, essential subunit of the Sec protein translocation channel SecYEG. Clamps together the 2 halves of SecY. May contact the channel plug during translocation. The sequence is that of Protein translocase subunit SecE from Streptomyces lividans.